A 306-amino-acid chain; its full sequence is Dermonecrotic toxin LiSicTox-alphaIA1bi (306 aa).

A signal peptide spans 1-18 (MLPYIVLVLGCWSVLSQA). Residues 19–26 (AQTDDEER) constitute a propeptide that is removed on maturation. Histidine 38 is an active-site residue. 2 residues coordinate Mg(2+): glutamate 58 and aspartate 60. The active-site Nucleophile is histidine 74. 2 disulfide bridges follow: cysteine 78/cysteine 84 and cysteine 80/cysteine 223. Aspartate 118 serves as a coordination point for Mg(2+).

It belongs to the arthropod phospholipase D family. Class II subfamily. Class IIa sub-subfamily. Mg(2+) serves as cofactor. In terms of tissue distribution, expressed by the venom gland.

It is found in the secreted. It carries out the reaction an N-(acyl)-sphingosylphosphocholine = an N-(acyl)-sphingosyl-1,3-cyclic phosphate + choline. The enzyme catalyses an N-(acyl)-sphingosylphosphoethanolamine = an N-(acyl)-sphingosyl-1,3-cyclic phosphate + ethanolamine. The catalysed reaction is a 1-acyl-sn-glycero-3-phosphocholine = a 1-acyl-sn-glycero-2,3-cyclic phosphate + choline. It catalyses the reaction a 1-acyl-sn-glycero-3-phosphoethanolamine = a 1-acyl-sn-glycero-2,3-cyclic phosphate + ethanolamine. Its function is as follows. Dermonecrotic toxins cleave the phosphodiester linkage between the phosphate and headgroup of certain phospholipids (sphingolipid and lysolipid substrates), forming an alcohol (often choline) and a cyclic phosphate. This toxin acts on sphingomyelin (SM). The level of enzymatic activity is high according to Tambourgi and colleagues or low according to Felicori and colleagues. It may also act on ceramide phosphoethanolamine (CPE), lysophosphatidylcholine (LPC) and lysophosphatidylethanolamine (LPE), but not on lysophosphatidylserine (LPS), and lysophosphatidylglycerol (LPG). It acts by transphosphatidylation, releasing exclusively cyclic phosphate products as second products. It induces complement-dependent hemolysis, dermonecrosis, vascular permeability and platelet aggregation. Both C5a and the membrane attack complex may play a role in the induction of dermonecrosis. MMP-9 and MMP-2 produced by skin fibroblasts can also contribute to proteolytic tissue destruction. This is Dermonecrotic toxin LiSicTox-alphaIA1bi from Loxosceles intermedia (Brown spider).